Here is a 242-residue protein sequence, read N- to C-terminus: Endoglucanase (242 aa).

The signal sequence occupies residues 1–21 (MQVIVLPLVFLATFATSGSLA). Asp47 functions as the Nucleophile in the catalytic mechanism. Asn79, Asn103, and Asn217 each carry an N-linked (GlcNAc...) asparagine glycan.

It belongs to the glycosyl hydrolase 45 (cellulase K) family. As to expression, expressed in larval carcasses and gut, and adult gut.

The protein resides in the secreted. It catalyses the reaction Endohydrolysis of (1-&gt;4)-beta-D-glucosidic linkages in cellulose, lichenin and cereal beta-D-glucans.. The protein is Endoglucanase of Phaedon cochleariae (Mustard beetle).